The sequence spans 280 residues: MSSSLQELCRKKLPDCILPEFFDDYVLQLLGLHWQDHGSLQRIEKNQILVQQEPIHINEALKVAASEGNYEIVELLLSWEADPRYAVVGALESKYYDLVYKYYDLVKDCHDILPLIQNPETFEKCHELNNPCSLKCLFKHAVIHDMLPILQKYTYFLDGWEYCNQMLFELACSKKKYEMVVWIEGVLGIGKVTSLFTIAISNRDLHLYSLGHLIILERMQSCGQDPTFLLNHFLRDVSIKGLLPFVLKTIEYGGSKEIAITLAKKYQHKHILKYFETGKC.

Belongs to the asfivirus MGF 505 family.

Plays a role in virus cell tropism, and may be required for efficient virus replication in macrophages. This is Protein MGF 505-3R from African swine fever virus (strain Badajoz 1971 Vero-adapted) (Ba71V).